The primary structure comprises 314 residues: tRNA dimethylallyltransferase (314 aa).

13-20 (GPTAVGKT) serves as a coordination point for ATP. 15 to 20 (TAVGKT) provides a ligand contact to substrate. Residues 38-41 (DSMQ) form an interaction with substrate tRNA region.

It belongs to the IPP transferase family. Monomer. Mg(2+) serves as cofactor.

It catalyses the reaction adenosine(37) in tRNA + dimethylallyl diphosphate = N(6)-dimethylallyladenosine(37) in tRNA + diphosphate. Functionally, catalyzes the transfer of a dimethylallyl group onto the adenine at position 37 in tRNAs that read codons beginning with uridine, leading to the formation of N6-(dimethylallyl)adenosine (i(6)A). The sequence is that of tRNA dimethylallyltransferase from Bacillus velezensis (strain DSM 23117 / BGSC 10A6 / LMG 26770 / FZB42) (Bacillus amyloliquefaciens subsp. plantarum).